The sequence spans 714 residues: Calpain-1 catalytic subunit (714 aa).

A Calpain catalytic domain is found at 55 to 354; sequence LFRDEAFPPV…FTRLEICNLT (300 aa). The Ca(2+) site is built by Gln109 and Asp114. Residues Cys115, His272, and Asn296 contribute to the active site. Ca(2+)-binding residues include Asn316, Asp318, and Asp323. Thr354 bears the Phosphothreonine mark. Residues 355-526 are domain III; it reads PDALKSRTIR…KSAGTAELDD (172 aa). Residues 527 to 542 are linker; the sequence is QIQANLPDEQVLSEEE. EF-hand domains are found at residues 541–576, 585–618, 615–650, and 680–714; these read EEIDENFKALFRQLAGEDMETSVKELRTILNRIISK, FSLESCRSMVNLMDRDGNGKLGLVEFNILWNRIR, NRIRNYLSIFRKFDLDKSGSMSAYEMRMAIESAGFK, and VRLETMFRFFKTLDTDLDGVVTFDLFKWLQLTMFA. The interval 543–713 is domain IV; sequence IDENFKALFR…LFKWLQLTMF (171 aa). Positions 598, 600, 602, 604, 609, 628, 630, 632, 634, and 639 each coordinate Ca(2+).

This sequence belongs to the peptidase C2 family. As to quaternary structure, forms a heterodimer with a small (regulatory) subunit CAPNS1. It depends on Ca(2+) as a cofactor. Post-translationally, undergoes calcium-induced successive autoproteolytic cleavages that generate a membrane-bound 78 kDa active form and an intracellular 75 kDa active form. Calpastatin reduces with high efficiency the transition from 78 kDa to 75 kDa calpain forms.

It localises to the cytoplasm. Its subcellular location is the cell membrane. The enzyme catalyses Broad endopeptidase specificity.. Activated by micromolar concentrations of calcium and inhibited by calpastatin. Functionally, calcium-regulated non-lysosomal thiol-protease which catalyzes limited proteolysis of substrates involved in cytoskeletal remodeling and signal transduction. Proteolytically cleaves CTBP1. Cleaves and activates caspase-7 (CASP7). This chain is Calpain-1 catalytic subunit, found in Pongo abelii (Sumatran orangutan).